A 175-amino-acid chain; its full sequence is NADH-ubiquinone oxidoreductase chain 6 (175 aa).

The next 6 membrane-spanning stretches (helical) occupy residues 1–21 (MMYI…GFSS), 24–44 (SPVY…GIIM), 51–71 (LGLV…GYTI), 87–107 (VVLS…VWLF), 112–132 (ELVG…EGGF), and 148–168 (CGFW…FIAT).

It belongs to the complex I subunit 6 family. In terms of assembly, core subunit of respiratory chain NADH dehydrogenase (Complex I) which is composed of 45 different subunits.

Its subcellular location is the mitochondrion inner membrane. The enzyme catalyses a ubiquinone + NADH + 5 H(+)(in) = a ubiquinol + NAD(+) + 4 H(+)(out). Functionally, core subunit of the mitochondrial membrane respiratory chain NADH dehydrogenase (Complex I) which catalyzes electron transfer from NADH through the respiratory chain, using ubiquinone as an electron acceptor. Essential for the catalytic activity and assembly of complex I. The chain is NADH-ubiquinone oxidoreductase chain 6 (MT-ND6) from Elephas maximus (Indian elephant).